We begin with the raw amino-acid sequence, 79 residues long: RNA-binding protein Hfq (79 aa).

In terms of domain architecture, Sm spans 10 to 69 (DPFLNALRKEHVPVSIYLVNGIKLQGNIESFDQYVVLLRNTVTQMVYKHAISTVVPARPV).

Belongs to the Hfq family. Homohexamer.

In terms of biological role, RNA chaperone that binds small regulatory RNA (sRNAs) and mRNAs to facilitate mRNA translational regulation in response to envelope stress, environmental stress and changes in metabolite concentrations. Also binds with high specificity to tRNAs. This Burkholderia cenocepacia (strain HI2424) protein is RNA-binding protein Hfq.